We begin with the raw amino-acid sequence, 298 residues long: Protein RKD2 (298 aa).

Basic and acidic residues-rich tracts occupy residues 1–10 (MADHTTKEQK) and 81–102 (EQNR…VKET). Disordered stretches follow at residues 1-22 (MADH…PSFD) and 73-112 (SSAS…NERH). The 83-residue stretch at 121–203 (SDITTYTTSS…KMEGEENAEK (83 aa)) folds into the RWP-RK domain. A coiled-coil region spans residues 188-222 (NVKELQKMEGEENAEKLQDALEMLEKEKRTIEDLP). Residues 241 to 279 (NHKRKKKRSLKSDQSQVPSCSSSGSVPSDESVDEAGMES) form a disordered region. A compositionally biased stretch (low complexity) spans 252-269 (SDQSQVPSCSSSGSVPSD). The segment covering 270–279 (ESVDEAGMES) has biased composition (acidic residues).

Its subcellular location is the nucleus. Its function is as follows. Putative transcription factor. In Arabidopsis thaliana (Mouse-ear cress), this protein is Protein RKD2 (RKD2).